The chain runs to 81 residues: ATP synthase subunit c (81 aa).

Transmembrane regions (helical) follow at residues 7 to 27 (AASV…PGIG) and 57 to 77 (LAFM…LLFA).

This sequence belongs to the ATPase C chain family. In terms of assembly, F-type ATPases have 2 components, F(1) - the catalytic core - and F(0) - the membrane proton channel. F(1) has five subunits: alpha(3), beta(3), gamma(1), delta(1), epsilon(1). F(0) has four main subunits: a(1), b(1), b'(1) and c(10-14). The alpha and beta chains form an alternating ring which encloses part of the gamma chain. F(1) is attached to F(0) by a central stalk formed by the gamma and epsilon chains, while a peripheral stalk is formed by the delta, b and b' chains.

It is found in the cellular thylakoid membrane. Functionally, f(1)F(0) ATP synthase produces ATP from ADP in the presence of a proton or sodium gradient. F-type ATPases consist of two structural domains, F(1) containing the extramembraneous catalytic core and F(0) containing the membrane proton channel, linked together by a central stalk and a peripheral stalk. During catalysis, ATP synthesis in the catalytic domain of F(1) is coupled via a rotary mechanism of the central stalk subunits to proton translocation. Key component of the F(0) channel; it plays a direct role in translocation across the membrane. A homomeric c-ring of between 10-14 subunits forms the central stalk rotor element with the F(1) delta and epsilon subunits. The chain is ATP synthase subunit c from Synechococcus sp. (strain CC9902).